Consider the following 76-residue polypeptide: UPF0346 protein lhv_1069 (76 aa).

It belongs to the UPF0346 family.

This chain is UPF0346 protein lhv_1069, found in Lactobacillus helveticus (strain DPC 4571).